The following is a 356-amino-acid chain: C-X-C chemokine receptor type 2 (356 aa).

At 1-46 the chain is on the extracellular side; the sequence is MEYINWDNYSLEDLFGDIDNYTYNTEMPIIPADSAPCRPESLDINK. N-linked (GlcNAc...) asparagine glycosylation is found at N8 and N20. The chain crosses the membrane as a helical span at residues 47-73; that stretch reads YAVVVIYVLVFVLNLLGNSLVIMVVLY. The Cytoplasmic segment spans residues 74–82; it reads SRVSHSVTD. The helical transmembrane segment at 83 to 103 threads the bilayer; the sequence is VYLLNLAIADLLFALTLPIWA. The Extracellular segment spans residues 104–118; the sequence is VSKVKGWIFGTPLCK. A disulfide bridge links C117 with C194. The helical transmembrane segment at 119 to 140 threads the bilayer; sequence IVSLLKEVNFYSGILLLASISM. At 141-161 the chain is on the cytoplasmic side; the sequence is DRYLAIVHATRRLTQKKHWVK. The chain crosses the membrane as a helical span at residues 162–181; it reads FICLGIWALSLILSLPIFVF. Topologically, residues 182–206 are extracellular; that stretch reads RRAINPPYSSPVCYEDMGTNTTKLR. The chain crosses the membrane as a helical span at residues 207–229; the sequence is IVMRALPQTFGFIVPLMIMLFCY. Topologically, residues 230–249 are cytoplasmic; sequence GLTLRTLFEAHMGQKHRAMR. A helical membrane pass occupies residues 250-269; it reads VIFAVVLVFLLCWLPYNLVA. Topologically, residues 270-290 are extracellular; it reads DTLMRLQAIEETCQRRNDIGR. A helical transmembrane segment spans residues 291–311; it reads ALDATEILGFFHSCLNPLIYA. Topologically, residues 312-356 are cytoplasmic; the sequence is FIGQKFRHGLLKIMAFHGLISKEYLPKDSRPSFVGSSSANTSTTF.

The protein belongs to the G-protein coupled receptor 1 family. In terms of assembly, interacts with IL8. Interacts with GNAI2. Phosphorylated upon ligand binding; which is required for desensitization.

The protein localises to the cell membrane. Functionally, receptor for interleukin-8 which is a powerful neutrophil chemotactic factor. Binding of IL-8 to the receptor causes activation of neutrophils. This response is mediated via a G-protein that activates a phosphatidylinositol-calcium second messenger system. Binds to IL-8 with high affinity. Also binds with high affinity to CXCL3, GRO/MGSA and NAP-2. This chain is C-X-C chemokine receptor type 2 (CXCR2), found in Canis lupus familiaris (Dog).